Reading from the N-terminus, the 91-residue chain is Small ribosomal subunit protein uS17 (91 aa).

It belongs to the universal ribosomal protein uS17 family. Part of the 30S ribosomal subunit.

In terms of biological role, one of the primary rRNA binding proteins, it binds specifically to the 5'-end of 16S ribosomal RNA. This is Small ribosomal subunit protein uS17 from Thermobifida fusca (strain YX).